Reading from the N-terminus, the 857-residue chain is Putative disease resistance protein At1g50180 (857 aa).

Positions 27–60 (IGDQVKQLQDELKRLNCFLKDADEKQHESERVRN) form a coiled coil. The region spanning 148–461 (SLREQRQSFP…AEGMVMPVKH (314 aa)) is the NB-ARC domain. 192-199 (GMGGLGKT) serves as a coordination point for ATP. LRR repeat units follow at residues 653 to 678 (MTSL…SLSK), 680 to 703 (LKRL…DVTQ), 754 to 780 (LPNL…NLEN), and 791 to 816 (MMRL…RFLK).

The protein belongs to the disease resistance NB-LRR family.

In terms of biological role, potential disease resistance protein. The protein is Putative disease resistance protein At1g50180 of Arabidopsis thaliana (Mouse-ear cress).